A 2498-amino-acid chain; its full sequence is Nuclear receptor corepressor 1 (2498 aa).

Disordered stretches follow at residues 1–38 (MSSS…QQEY), 54–84 (IQQQ…SGYD), 134–169 (SEVK…SKLS), and 198–223 (QQQL…VEQK). Basic and acidic residues-rich tracts occupy residues 71-82 (PVSDRPQDRRSG), 134-148 (SEVK…KHES), and 204-213 (EAAKPPEPEK). The interval 154 to 304 (SGQPGDDQDA…REQNICQRYD (151 aa)) is interaction with tbl1xr1-A. A coiled-coil region spans residues 168–208 (LSKEELIQSMDRVDREIAKVEQQILKLKKKQQQLEEEAAKP). Residues 427 to 478 (QFMNVWTDHEKEIFKEKFVRHPKNFGLIASYLERKNVSDCVLYYYLTKKNEN) form the SANT 1 domain. Over residues 483-493 (VRRNYPKRRGR) the composition is skewed to basic residues. Disordered regions lie at residues 483–649 (VRRN…GSKS), 668–912 (NLLQ…FGSR), 1075–1122 (SLSD…GTPG), 1417–1436 (DLVS…IMEG), 1470–1583 (SWGV…QRES), 1737–1851 (PGTQ…AQES), and 1916–1990 (PQME…TAHT). 2 stretches are compositionally biased toward basic and acidic residues: residues 502–525 (SQEE…KEDE) and 535–548 (KEEL…KIDA). Positions 502–552 (SQEEKEIEKVEEEKADRNDKKEDERREEEEKEEKEELREGAKDKIDAVAED) form a coiled coil. Residues 582 to 611 (ASEAAAANAVTTATTAPVTTTSTATTVAPV) are compositionally biased toward low complexity. Positions 612 to 627 (PVAPPPEEPTPPPPPQ) are enriched in pro residues. Residues 628 to 665 (EQSLVDHGRNWGAIAKMVGSKSESQCKNFYFNYKRRHN) form the SANT 2 domain. Over residues 689-699 (QCDSIASTVSA) the composition is skewed to polar residues. Positions 700-719 (QEDDENEASNEEENPEDSEG) are enriched in acidic residues. Low complexity-rich tracts occupy residues 727 to 738 (ESAPSPSPAEAA) and 761 to 774 (DAAS…SPSP). The segment covering 854 to 863 (MERLMDRAEA) has biased composition (basic and acidic residues). Composition is skewed to polar residues over residues 872–891 (QNIS…SATC) and 1102–1122 (ATSS…GTPG). Residues 1484 to 1501 (KMGERSKHEDTKSSDAIR) show a composition bias toward basic and acidic residues. A compositionally biased stretch (polar residues) spans 1505 to 1516 (TSVVSSGPSVLR). The segment covering 1545–1558 (PSPMSRSSPMARSA) has biased composition (low complexity). Positions 1765-1804 (VSAERERERERERERDREREKEQRERESDRERERDRLAHA) form a coiled coil. The segment covering 1767–1802 (AERERERERERERDREREKEQRERESDRERERDRLA) has biased composition (basic and acidic residues). Composition is skewed to low complexity over residues 1803-1813 (HAAAAAAAASA) and 1820-1835 (RPVS…RPSS). The segment covering 1842–1851 (PSPSVRAQES) has biased composition (polar residues). The segment covering 1921-1942 (AKPKESKNDSARSEENLSRRNA) has biased composition (basic and acidic residues). The span at 1958 to 1980 (SPYTSSSFSSSKSQSQPSSAVYS) shows a compositional bias: low complexity. A CORNR box 1 motif is present at residues 2012–2016 (IDVII). Positions 2022–2109 (SDKDGRERNS…SPPQQTIPGH (88 aa)) are disordered. The segment covering 2031-2040 (SQSSDASSSH) has biased composition (low complexity). Residues 2043–2052 (HRYEAPRETI) are compositionally biased toward basic and acidic residues. Residues 2093 to 2106 (RYRQQQESPPQQTI) are compositionally biased toward polar residues. Positions 2123-2127 (ICHII) match the CORNR box 2 motif. Low complexity predominate over residues 2136–2145 (PVNQPLQQPP). The segment at 2136–2222 (PVNQPLQQPP…PISPPQAPML (87 aa)) is disordered. Positions 2146–2175 (ASTFQSTNPTSTAVRTKASSRFSPESQVQP) are enriched in polar residues. The segment covering 2190–2209 (IPDKPRGRPGKSPDRGHISE) has biased composition (basic and acidic residues). The CORNR box 3 signature appears at 2326-2330 (LEDII). 2 disordered regions span residues 2344-2446 (DHGV…YNPL) and 2464-2498 (TSMT…DSDE). Positions 2353–2362 (QGNQSGTPNS) are enriched in polar residues. Basic residues predominate over residues 2380 to 2394 (HKQKLISKYGSRKTK). Composition is skewed to polar residues over residues 2464 to 2476 (TSMT…QQSR) and 2489 to 2498 (QYETLSDSDE).

Belongs to the N-CoR nuclear receptor corepressors family. In terms of assembly, forms a large corepressor complex that contains sin3a/b, histone deacetylases hdac1 and hdac2, rbbp4 and possibly rbbp7. Interacts with the thyroid receptor (TR, composed of rxra and thrb) and the retinoid acid receptor (RAR, composed of rxra and rara) in the absence of ligand. Interacts with tbl1xr1-A and possibly tbl1xr1-B. Interacts with zbtb33/kaiso.

It is found in the nucleus. Mediates transcriptional repression by certain nuclear receptors. Participates in complexes which promote histone deacetylation and the formation of repressive chromatin structures which may impede access by the basal transcription machinery. In association with hdac3, may play a role in the regulation of the circadian clock. The polypeptide is Nuclear receptor corepressor 1 (ncor1) (Xenopus laevis (African clawed frog)).